The following is a 78-amino-acid chain: MALIRKTFYFVFAVFFILVQQPSGCQAGLEFSEPFPSGRFAVCESCKLGRGKCRKECLENEKPDGSCRLNFLCCRPRM.

A signal peptide spans 1–27; it reads MALIRKTFYFVFAVFFILVQQPSGCQA. Disulfide bonds link C43–C74, C53–C67, and C57–C73.

It belongs to the beta-defensin family.

The protein resides in the secreted. Has antimicrobial activity. This Macaca fascicularis (Crab-eating macaque) protein is Beta-defensin 105A (DEFB105A).